Here is a 344-residue protein sequence, read N- to C-terminus: Holliday junction branch migration complex subunit RuvB (344 aa).

Residues 4 to 194 (CLLRFCYNSL…FGITGHMEYY (191 aa)) are large ATPase domain (RuvB-L). Residues L33, R34, G75, K78, T79, T80, 141-143 (EDF), R184, Y194, and R231 each bind ATP. A Mg(2+)-binding site is contributed by T79. Residues 195–265 (TDIDLTEIVE…ITDKALTMLD (71 aa)) are small ATPAse domain (RuvB-S). A head domain (RuvB-H) region spans residues 268-344 (HEGLDYVDQK…YEHLGYRYTE (77 aa)). Residues R304, R323, R325, and R328 each contribute to the DNA site.

Belongs to the RuvB family. In terms of assembly, homohexamer. Forms an RuvA(8)-RuvB(12)-Holliday junction (HJ) complex. HJ DNA is sandwiched between 2 RuvA tetramers; dsDNA enters through RuvA and exits via RuvB. An RuvB hexamer assembles on each DNA strand where it exits the tetramer. Each RuvB hexamer is contacted by two RuvA subunits (via domain III) on 2 adjacent RuvB subunits; this complex drives branch migration. In the full resolvosome a probable DNA-RuvA(4)-RuvB(12)-RuvC(2) complex forms which resolves the HJ.

The protein resides in the cytoplasm. The enzyme catalyses ATP + H2O = ADP + phosphate + H(+). The RuvA-RuvB-RuvC complex processes Holliday junction (HJ) DNA during genetic recombination and DNA repair, while the RuvA-RuvB complex plays an important role in the rescue of blocked DNA replication forks via replication fork reversal (RFR). RuvA specifically binds to HJ cruciform DNA, conferring on it an open structure. The RuvB hexamer acts as an ATP-dependent pump, pulling dsDNA into and through the RuvAB complex. RuvB forms 2 homohexamers on either side of HJ DNA bound by 1 or 2 RuvA tetramers; 4 subunits per hexamer contact DNA at a time. Coordinated motions by a converter formed by DNA-disengaged RuvB subunits stimulates ATP hydrolysis and nucleotide exchange. Immobilization of the converter enables RuvB to convert the ATP-contained energy into a lever motion, pulling 2 nucleotides of DNA out of the RuvA tetramer per ATP hydrolyzed, thus driving DNA branch migration. The RuvB motors rotate together with the DNA substrate, which together with the progressing nucleotide cycle form the mechanistic basis for DNA recombination by continuous HJ branch migration. Branch migration allows RuvC to scan DNA until it finds its consensus sequence, where it cleaves and resolves cruciform DNA. This is Holliday junction branch migration complex subunit RuvB from Streptococcus mutans serotype c (strain ATCC 700610 / UA159).